The sequence spans 624 residues: MNMSSSSRKLSRLFNIVTQNQKSPVLLSSDQEAARRITACLVEKSTIGKLQSNPSLLFNLNSNVTRLVLSEPTLPTQSCIDFFKLLREFESNLKPDLTAVVTLSHRLYSNRRFNEMRSLLNSVVNDGFYKRPVEELGSAMVDCDISEEKFEFFEKFFDLVFRVYVDNGMFEEGLRVFDYMVKKGLSIDERSCIVFLVAAKKRRRIDLCLEIFRRMVDSGVKITVYSLTIVVEGLCRRGEVEKSKKLIKEFSVKGIKPEAYTYNTIINAYVKQRDFSGVEGVLKVMKKDGVVYNKVTYTLLMELSVKNGKMSDAEKLFDEMRERGIESDVHVYTSLISWNCRKGNMKRAFLLFDELTEKGLSPSSYTYGALIDGVCKVGEMGAAEILMNEMQSKGVNITQVVFNTLIDGYCRKGMVDEASMIYDVMEQKGFQADVFTCNTIASCFNRLKRYDEAKQWLFRMMEGGVKLSTVSYTNLIDVYCKEGNVEEAKRLFVEMSSKGVQPNAITYNVMIYAYCKQGKIKEARKLRANMEANGMDPDSYTYTSLIHGECIADNVDEAMRLFSEMGLKGLDQNSVTYTVMISGLSKAGKSDEAFGLYDEMKRKGYTIDNKVYTALIGSMHSPET.

13 PPR repeats span residues 153 to 187 (FEKFFDLVFRVYVDNGMFEEGLRVFDYMVKKGLSI), 188 to 222 (DERSCIVFLVAAKKRRRIDLCLEIFRRMVDSGVKI), 223 to 257 (TVYSLTIVVEGLCRRGEVEKSKKLIKEFSVKGIKP), 258 to 292 (EAYTYNTIINAYVKQRDFSGVEGVLKVMKKDGVVY), 293 to 327 (NKVTYTLLMELSVKNGKMSDAEKLFDEMRERGIES), 328 to 362 (DVHVYTSLISWNCRKGNMKRAFLLFDELTEKGLSP), 363 to 397 (SSYTYGALIDGVCKVGEMGAAEILMNEMQSKGVNI), 398 to 432 (TQVVFNTLIDGYCRKGMVDEASMIYDVMEQKGFQA), 433 to 467 (DVFTCNTIASCFNRLKRYDEAKQWLFRMMEGGVKL), 468 to 502 (STVSYTNLIDVYCKEGNVEEAKRLFVEMSSKGVQP), 503 to 537 (NAITYNVMIYAYCKQGKIKEARKLRANMEANGMDP), 538 to 572 (DSYTYTSLIHGECIADNVDEAMRLFSEMGLKGLDQ), and 573 to 607 (NSVTYTVMISGLSKAGKSDEAFGLYDEMKRKGYTI).

Belongs to the PPR family. P subfamily.

This is Pentatricopeptide repeat-containing protein At2g32630 from Arabidopsis thaliana (Mouse-ear cress).